The sequence spans 108 residues: Class I hydrophobin 3 (108 aa).

A signal peptide spans 1-17; sequence MFFQTTIVAALASLAVA. Intrachain disulfides connect Cys-28–Cys-87, Cys-35–Cys-81, Cys-36–Cys-69, and Cys-88–Cys-101. N-linked (GlcNAc...) asparagine glycosylation occurs at Asn-37.

The protein belongs to the fungal hydrophobin family. Self-assembles to form functional amyloid fibrils called rodlets. Self-assembly into fibrillar rodlets occurs spontaneously at hydrophobic:hydrophilic interfaces and the rodlets further associate laterally to form amphipathic monolayers.

Its subcellular location is the secreted. It is found in the cell wall. Aerial growth, conidiation, and dispersal of filamentous fungi in the environment rely upon a capability of their secreting small amphipathic proteins called hydrophobins (HPBs) with low sequence identity. Class I can self-assemble into an outermost layer of rodlet bundles on aerial cell surfaces, conferring cellular hydrophobicity that supports fungal growth, development and dispersal; whereas Class II form highly ordered films at water-air interfaces through intermolecular interactions but contribute nothing to the rodlet structure. Vmh3 is a class I hydrophobin that is essential for the maintenance of the surface hydrophobicity of the mycelium and might be involved in the development of fruiting bodies. Plays an important role in hyphal resistance against environmental stress. Necessary for the efficient biodegradation of lignin. The protein is Class I hydrophobin 3 of Pleurotus ostreatus (strain PC15) (Oyster mushroom).